Here is a 306-residue protein sequence, read N- to C-terminus: Esterase tropF (306 aa).

Residues S147, D248, and H276 each act as charge relay system in the active site.

This sequence belongs to the LovG family.

It functions in the pathway secondary metabolite biosynthesis. Its function is as follows. Esterase; part of the gene cluster that mediates the biosynthesis of the tropolone class of fungal maleic anhydrides. The pathway begins with the synthesis of 3-methylorcinaldehyde by the non-reducing polyketide synthase (PKS) tropA. 3-methylorcinaldehyde is the substrate for the FAD-dependent monooxygenase tropB to yield a dearomatized hydroxycyclohexadione. The 2-oxoglutarate-dependent dioxygenase tropC then performs the oxidative ring expansion to provide the first tropolone metabolite stipitaldehyde. Trop D converts stipitaldehyde into stipitacetal which is in turn converted to stipitalide by the short-chain dehydrogenase/reductase tropE. The next steps involve tropF, tropG, tropH, tropI and tropJ to form successive tropolone maleic anhydrides including stipitaldehydic, stipitatonic and stipitatic acids. This Talaromyces stipitatus (strain ATCC 10500 / CBS 375.48 / QM 6759 / NRRL 1006) (Penicillium stipitatum) protein is Esterase tropF.